The chain runs to 706 residues: Polyribonucleotide nucleotidyltransferase (706 aa).

Mg(2+)-binding residues include Asp487 and Asp493. In terms of domain architecture, KH spans 554-613; the sequence is PRIHTMKISSDKIKDVIGKGGAVIRALCEETGTTIEIEDDGTIKIAATEGAAAKEAIRRI. One can recognise an S1 motif domain in the interval 623-691; that stretch reads GRIYQGKVAR…RQGRVRLSMK (69 aa).

The protein belongs to the polyribonucleotide nucleotidyltransferase family. As to quaternary structure, component of the RNA degradosome, which is a multiprotein complex involved in RNA processing and mRNA degradation. Mg(2+) serves as cofactor.

Its subcellular location is the cytoplasm. It catalyses the reaction RNA(n+1) + phosphate = RNA(n) + a ribonucleoside 5'-diphosphate. Functionally, involved in mRNA degradation. Catalyzes the phosphorolysis of single-stranded polyribonucleotides processively in the 3'- to 5'-direction. This chain is Polyribonucleotide nucleotidyltransferase, found in Vibrio atlanticus (strain LGP32) (Vibrio splendidus (strain Mel32)).